The following is a 188-amino-acid chain: Elongation factor P (188 aa).

Belongs to the elongation factor P family.

Its subcellular location is the cytoplasm. Its pathway is protein biosynthesis; polypeptide chain elongation. Its function is as follows. Involved in peptide bond synthesis. Stimulates efficient translation and peptide-bond synthesis on native or reconstituted 70S ribosomes in vitro. Probably functions indirectly by altering the affinity of the ribosome for aminoacyl-tRNA, thus increasing their reactivity as acceptors for peptidyl transferase. The chain is Elongation factor P from Wolbachia pipientis subsp. Culex pipiens (strain wPip).